Here is a 640-residue protein sequence, read N- to C-terminus: Large subunit GTPase 1 homolog (640 aa).

Positions 165–426 constitute a CP-type G domain; that stretch reads WRQLWRVIER…LCDCPGLVMP (262 aa). 213–216 contacts GTP; sequence NKAD. Residues 251–341 form a disordered region; that stretch reads AEERGEDAMD…ESTATSSFYN (91 aa). Acidic residues-rich tracts occupy residues 253 to 270, 290 to 304, and 320 to 331; these read ERGE…TEEE, EKDE…EGED, and ESGDEDHAEENP. The segment covering 332–341 has biased composition (polar residues); that stretch reads ESTATSSFYN. GTP-binding positions include 375–382 and 419–422; these read GYPNVGKS and DCPG. The interval 602–640 is disordered; it reads GPVEAGKANTEQQAGKPWKKHGNRNKKEKVRRLNKHLDA. Residues 618 to 640 are compositionally biased toward basic residues; that stretch reads PWKKHGNRNKKEKVRRLNKHLDA.

It belongs to the TRAFAC class YlqF/YawG GTPase family. LSG1 subfamily.

Its subcellular location is the cytoplasm. The protein resides in the endoplasmic reticulum. It is found in the nucleus. It localises to the cajal body. It carries out the reaction GTP + H2O = GDP + phosphate + H(+). Functions as a GTPase. May act by mediating the release of NMD3 from the 60S ribosomal subunit after export into the cytoplasm during the 60S ribosomal subunit maturation. This Danio rerio (Zebrafish) protein is Large subunit GTPase 1 homolog.